Consider the following 332-residue polypeptide: Stage II sporulation protein B (332 aa).

A compositionally biased stretch (basic residues) spans methionine 1–serine 10. Positions methionine 1–tryptophan 71 are disordered. A compositionally biased stretch (basic and acidic residues) spans lysine 11 to threonine 27. A helical membrane pass occupies residues alanine 112–isoleucine 132. Residues serine 139–threonine 174 form a disordered region. Polar residues predominate over residues aspartate 161–threonine 174. The SPOR domain maps to glutamate 175–glutamate 250.

Its subcellular location is the cell membrane. Appears to be degraded early in engulfment, in correlation with its loss from polar septa. In terms of biological role, facilitates the rapid and spatially regulated dissolution of septal peptidoglycan. The protein is Stage II sporulation protein B of Bacillus subtilis (strain 168).